The chain runs to 908 residues: Alanine--tRNA ligase (908 aa).

4 residues coordinate Zn(2+): histidine 588, histidine 592, cysteine 691, and histidine 695.

Belongs to the class-II aminoacyl-tRNA synthetase family. Zn(2+) is required as a cofactor.

It localises to the cytoplasm. It catalyses the reaction tRNA(Ala) + L-alanine + ATP = L-alanyl-tRNA(Ala) + AMP + diphosphate. In terms of biological role, catalyzes the attachment of alanine to tRNA(Ala) in a two-step reaction: alanine is first activated by ATP to form Ala-AMP and then transferred to the acceptor end of tRNA(Ala). Also edits incorrectly charged Ser-tRNA(Ala) and Gly-tRNA(Ala) via its editing domain. The chain is Alanine--tRNA ligase from Mycobacterium leprae (strain TN).